Consider the following 141-residue polypeptide: Ribonuclease VapC2 (141 aa).

The region spanning 7-129 (LIDKSALVRL…FDAIAALTGQ (123 aa)) is the PINc domain. Mg(2+) contacts are provided by aspartate 99, aspartate 117, and aspartate 119.

It belongs to the PINc/VapC protein family. Probably active as a homodimer. Mg(2+) is required as a cofactor.

Functionally, toxic component of a type II toxin-antitoxin (TA) system. Acts as an RNase. All its toxic effects are neutralized by coexpression with cognate antitoxin VapB2. In Mycobacterium tuberculosis (strain CDC 1551 / Oshkosh), this protein is Ribonuclease VapC2.